The sequence spans 150 residues: Monooxygenase dmxR10 (150 aa).

Belongs to the avfA family.

Its pathway is secondary metabolite biosynthesis. Monooxygenase; part of the gene cluster that mediates the biosynthesis of the dimeric xanthones cryptosporioptides. The pathway begins with the synthesis of atrochrysone thioester by the polyketide synthase dmx-nrPKS. The atrochrysone carboxyl ACP thioesterase dmxR1 then breaks the thioester bond and releases the atrochrysone carboxylic acid from dmx-nrPKS. Atrochrysone carboxylic acid is decarboxylated by the decarboxylase dmxR15, and oxidized by the anthrone oxygenase dmxR16 to yield emodin. Emodin is then reduced to emodin hydroquinone by the oxidoreductase dmxR7. A-ring reduction by the short chain dehydrogenase dmxR18, dehydration by the scytalone dehydratase-like protein dmxR17 and probable spontaneous re-oxidation, results in overall deoxygenation to chrysophanol. Baeyer-Villiger oxidation by the Baeyer-Villiger monooxygenase (BVMO) dmxR6 then yields monodictylactone in equilibrium with monodictyphenone. In the case of the cryptosporioptides biosynthesis, monodictylactone is reduced at C-12 to an alcohol (by the short chain dehydrogenases dmxR12 or dmxR8) and hydroxylated at C-5 by dmxR9, yielding the electron-rich aromatic which could eliminate H(2)O to form the ortho-quinonemethide, followed by tautomerisation to paraquinone and complete the formal reduction to produce the 10-methylgroup. Conjugate addition of C-4a-OH to the resulting paraquinone by the monooxygenase dmxR10 then gives cyclohexadienone, which is then reduced at C-5 by the short chain dehydrogenase dmxR3 to give the dihydroxanthone. The 6,7-epoxide in the cryptosporioptides could be introduced by the cytochrome P450 monooxygenase dmxL3. The highly reducing PKS dmxL2 manufactures butyrate, which is further carboxylated by dmxL1 to form ethylmalonate. It is not yet clear whether the carboxylation occurs while the butyrate is attached to the ACP of dmxL2, but this unusual fungal metabolite could then be esterified to O-5 by the O-acetyltransferase dmxR13. Finally, dimerization performed by dmxR5 gives the observed dimers cryptosporioptides A, B and C as the final products of the pathway. This is Monooxygenase dmxR10 from Cryptosporiopsis sp. (strain 8999).